The primary structure comprises 225 residues: Ribonuclease 3 (225 aa).

The region spanning 7–129 (IPRLCRTLGY…IIGAVYLDSD (123 aa)) is the RNase III domain. Residue Glu42 participates in Mg(2+) binding. Asp46 is a catalytic residue. Positions 115 and 118 each coordinate Mg(2+). Glu118 is a catalytic residue. The region spanning 155–225 (DPKTLLQELL…AAQALELIKR (71 aa)) is the DRBM domain.

The protein belongs to the ribonuclease III family. Homodimer. Mg(2+) is required as a cofactor.

The protein localises to the cytoplasm. The catalysed reaction is Endonucleolytic cleavage to 5'-phosphomonoester.. Digests double-stranded RNA. Involved in the processing of primary rRNA transcript to yield the immediate precursors to the large and small rRNAs (23S and 16S). Processes some mRNAs, and tRNAs when they are encoded in the rRNA operon. Processes pre-crRNA and tracrRNA of type II CRISPR loci if present in the organism. The protein is Ribonuclease 3 of Shewanella woodyi (strain ATCC 51908 / MS32).